Here is a 251-residue protein sequence, read N- to C-terminus: Small ribosomal subunit protein uS2B (251 aa).

Ser2 is modified (N-acetylserine). Low complexity predominate over residues 214-225 (AVEEASATGATE). The tract at residues 214-251 (AVEEASATGATEEATEEATEETTEATEWAEDNTENATW) is disordered. Over residues 226–251 (EATEEATEETTEATEWAEDNTENATW) the composition is skewed to acidic residues.

The protein belongs to the universal ribosomal protein uS2 family. In terms of assembly, component of the small ribosomal subunit. Mature ribosomes consist of a small (40S) and a large (60S) subunit. The 40S subunit contains about 33 different proteins and 1 molecule of RNA (18S). The 60S subunit contains about 49 different proteins and 3 molecules of RNA (25S, 5.8S and 5S). Interacts with RPS21.

The protein resides in the cytoplasm. In terms of biological role, required for the assembly and/or stability of the 40S ribosomal subunit. Required for the processing of the 20S rRNA-precursor to mature 18S rRNA in a late step of the maturation of 40S ribosomal subunits. This chain is Small ribosomal subunit protein uS2B, found in Vanderwaltozyma polyspora (strain ATCC 22028 / DSM 70294 / BCRC 21397 / CBS 2163 / NBRC 10782 / NRRL Y-8283 / UCD 57-17) (Kluyveromyces polysporus).